The sequence spans 462 residues: UDP-N-acetylmuramoylalanine--D-glutamate ligase (462 aa).

Residue 117–123 (GTNGKTT) participates in ATP binding.

It belongs to the MurCDEF family.

The protein resides in the cytoplasm. It carries out the reaction UDP-N-acetyl-alpha-D-muramoyl-L-alanine + D-glutamate + ATP = UDP-N-acetyl-alpha-D-muramoyl-L-alanyl-D-glutamate + ADP + phosphate + H(+). It participates in cell wall biogenesis; peptidoglycan biosynthesis. Its function is as follows. Cell wall formation. Catalyzes the addition of glutamate to the nucleotide precursor UDP-N-acetylmuramoyl-L-alanine (UMA). The protein is UDP-N-acetylmuramoylalanine--D-glutamate ligase of Parasynechococcus marenigrum (strain WH8102).